We begin with the raw amino-acid sequence, 303 residues long: Bifunctional protein FolD (303 aa).

Residues 168-170, Thr-197, and Val-238 contribute to the NADP(+) site; that span reads GRS.

Belongs to the tetrahydrofolate dehydrogenase/cyclohydrolase family. Homodimer.

It catalyses the reaction (6R)-5,10-methylene-5,6,7,8-tetrahydrofolate + NADP(+) = (6R)-5,10-methenyltetrahydrofolate + NADPH. It carries out the reaction (6R)-5,10-methenyltetrahydrofolate + H2O = (6R)-10-formyltetrahydrofolate + H(+). The protein operates within one-carbon metabolism; tetrahydrofolate interconversion. In terms of biological role, catalyzes the oxidation of 5,10-methylenetetrahydrofolate to 5,10-methenyltetrahydrofolate and then the hydrolysis of 5,10-methenyltetrahydrofolate to 10-formyltetrahydrofolate. This is Bifunctional protein FolD from Desulfosudis oleivorans (strain DSM 6200 / JCM 39069 / Hxd3) (Desulfococcus oleovorans).